The following is a 236-amino-acid chain: Lipoprotein NlpE (236 aa).

Positions 1–20 (MVKKAIVTAMAVISLFTLMG) are cleaved as a signal peptide. The N-palmitoyl cysteine moiety is linked to residue Cys21. Cys21 carries the S-diacylglycerol cysteine lipid modification. Residues 21-100 (CNNRAEVDTL…WARTADKLVL (80 aa)) form an N-terminal domain region. At 21–236 (CNNRAEVDTL…PNQDCSSLGQ (216 aa)) the chain is on the periplasmic side. The CXXC motif lies at 51 to 54 (CADC). The interval 126-236 (PIESQFNYTL…PNQDCSSLGQ (111 aa)) is C-terminal domain. Residues 144-156 (MTPMTLRGMYFYM) form a could contain a copper-binding motif region. Cys165 and Cys231 are joined by a disulfide.

In terms of assembly, probably exists as a monomer in vivo, can however form homodimers which swap domains. In terms of processing, palmitoylated. Post-translationally, seems to only form a disulfide bond between Cys-165 and Cys-231. The 2 other cysteine residues may however be chemically active.

The protein localises to the cell outer membrane. Functionally, involved in copper homeostasis, could be involved in both copper efflux and the delivery of copper to copper-dependent enzymes. Required for efficient binding of stationary phase cells to hydrophobic surfaces, part of the process of biofilm formation. Functions during envelope stress responses; when overproduced induces degP through the activation of the two-component envelope stress response system CpxA/CpxR. DegP induction seems to require membrane anchoring of this protein. Structural changes and/or interaction of the CXXC motif with its environment may lead to activation of the Cpx stress response. The chain is Lipoprotein NlpE from Escherichia coli (strain K12).